We begin with the raw amino-acid sequence, 189 residues long: uncharacterized protein (189 aa).

Positions 1-19 are cleaved as a signal peptide; that stretch reads MKRVLFFLLMIFVSFGVIA.

This is an uncharacterized protein from Escherichia coli (strain K12).